The primary structure comprises 421 residues: Histidine--tRNA ligase (421 aa).

It belongs to the class-II aminoacyl-tRNA synthetase family. As to quaternary structure, homodimer.

The protein localises to the cytoplasm. The enzyme catalyses tRNA(His) + L-histidine + ATP = L-histidyl-tRNA(His) + AMP + diphosphate + H(+). This is Histidine--tRNA ligase from Natranaerobius thermophilus (strain ATCC BAA-1301 / DSM 18059 / JW/NM-WN-LF).